A 293-amino-acid polypeptide reads, in one-letter code: Elongation factor Ts (293 aa).

The segment at 80-83 (TDFV) is involved in Mg(2+) ion dislocation from EF-Tu.

Belongs to the EF-Ts family.

It localises to the cytoplasm. In terms of biological role, associates with the EF-Tu.GDP complex and induces the exchange of GDP to GTP. It remains bound to the aminoacyl-tRNA.EF-Tu.GTP complex up to the GTP hydrolysis stage on the ribosome. The sequence is that of Elongation factor Ts from Enterococcus faecalis (strain ATCC 700802 / V583).